The sequence spans 219 residues: Envelope protein UL45 homolog (219 aa).

Residues 1–57 (MEDYKLLQLETATVDAQAPPLPTKTVPVFAPPLSTPPQPNELVYTKRRRTKRKAKCR) are Intravirion-facing. A helical; Signal-anchor for type II membrane protein membrane pass occupies residues 58-78 (CLFFTMGMFALGVLMTTAILV). Topologically, residues 79–219 (STFILTVPIG…RLDHIIPFPR (141 aa)) are virion surface. N-linked (GlcNAc...) asparagine; by host glycosylation is found at asparagine 113, asparagine 120, and asparagine 138.

This sequence belongs to the herpesviridae HHV-1 UL45 family. Post-translationally, N-glycosylated.

The protein localises to the virion membrane. The protein is Envelope protein UL45 homolog of Equine herpesvirus 1 (strain Ab4p) (EHV-1).